We begin with the raw amino-acid sequence, 293 residues long: 4-diphosphocytidyl-2-C-methyl-D-erythritol kinase (293 aa).

Lys-16 is an active-site residue. Residue 99-109 (PMGAGLGGGSS) participates in ATP binding. Residue Asp-141 is part of the active site.

Belongs to the GHMP kinase family. IspE subfamily.

The catalysed reaction is 4-CDP-2-C-methyl-D-erythritol + ATP = 4-CDP-2-C-methyl-D-erythritol 2-phosphate + ADP + H(+). It functions in the pathway isoprenoid biosynthesis; isopentenyl diphosphate biosynthesis via DXP pathway; isopentenyl diphosphate from 1-deoxy-D-xylulose 5-phosphate: step 3/6. Its function is as follows. Catalyzes the phosphorylation of the position 2 hydroxy group of 4-diphosphocytidyl-2C-methyl-D-erythritol. This is 4-diphosphocytidyl-2-C-methyl-D-erythritol kinase from Paraburkholderia phymatum (strain DSM 17167 / CIP 108236 / LMG 21445 / STM815) (Burkholderia phymatum).